Reading from the N-terminus, the 90-residue chain is Essential MCU regulator, mitochondrial (90 aa).

The helical transmembrane segment at 49–68 threads the bilayer; it reads GVLKLIFVSASSLYIGGLIA.

The protein belongs to the SMDT1/EMRE family.

The protein localises to the mitochondrion inner membrane. Essential regulatory subunit of the mitochondrial calcium uniporter (mcu-1) channel, a protein that mediates calcium uptake into mitochondria. The sequence is that of Essential MCU regulator, mitochondrial from Caenorhabditis elegans.